The sequence spans 428 residues: Adenylosuccinate synthetase (428 aa).

Residues 12–18 and 40–42 contribute to the GTP site; these read GDEGKGK and GHT. Asp13 functions as the Proton acceptor in the catalytic mechanism. Asp13 and Gly40 together coordinate Mg(2+). IMP contacts are provided by residues 13–16, 38–41, Thr128, Arg142, Gln223, Thr238, and Arg302; these read DEGK and NAGH. His41 serves as the catalytic Proton donor. 298–304 is a binding site for substrate; it reads VTTGRPR. GTP contacts are provided by residues Arg304, 330–332, and 412–414; these read KLD and GTG.

It belongs to the adenylosuccinate synthetase family. Homodimer. Mg(2+) serves as cofactor.

The protein resides in the cytoplasm. It carries out the reaction IMP + L-aspartate + GTP = N(6)-(1,2-dicarboxyethyl)-AMP + GDP + phosphate + 2 H(+). It participates in purine metabolism; AMP biosynthesis via de novo pathway; AMP from IMP: step 1/2. Functionally, plays an important role in the de novo pathway of purine nucleotide biosynthesis. Catalyzes the first committed step in the biosynthesis of AMP from IMP. This chain is Adenylosuccinate synthetase, found in Bifidobacterium adolescentis (strain ATCC 15703 / DSM 20083 / NCTC 11814 / E194a).